The following is a 161-amino-acid chain: Cytochrome c-type biogenesis protein CcmE (161 aa).

The Cytoplasmic portion of the chain corresponds to 1–8 (MNPRRKKR). A helical; Signal-anchor for type II membrane protein membrane pass occupies residues 9–29 (LTLAVALIAGVAAVASLLLYA). Residues 30–161 (LNSNLNLFYT…TYNQKALEDK (132 aa)) lie on the Periplasmic side of the membrane. Heme contacts are provided by His131 and Tyr135. The segment at 142–161 (EAMGQTHEKPTYNQKALEDK) is disordered. Residues 147–161 (THEKPTYNQKALEDK) are compositionally biased toward basic and acidic residues.

It belongs to the CcmE/CycJ family.

The protein localises to the cell inner membrane. In terms of biological role, heme chaperone required for the biogenesis of c-type cytochromes. Transiently binds heme delivered by CcmC and transfers the heme to apo-cytochromes in a process facilitated by CcmF and CcmH. This is Cytochrome c-type biogenesis protein CcmE from Shewanella frigidimarina (strain NCIMB 400).